Consider the following 456-residue polypeptide: Phosphomannomutase (456 aa).

The Phosphoserine intermediate role is filled by Ser-98. The Mg(2+) site is built by Ser-98, Asp-245, Asp-247, and Asp-249.

This sequence belongs to the phosphohexose mutase family. Mg(2+) is required as a cofactor.

The catalysed reaction is alpha-D-mannose 1-phosphate = D-mannose 6-phosphate. Its pathway is nucleotide-sugar biosynthesis; GDP-alpha-D-mannose biosynthesis; alpha-D-mannose 1-phosphate from D-fructose 6-phosphate: step 2/2. Functionally, involved in the biosynthesis of the capsular polysaccharide colanic acid. The sequence is that of Phosphomannomutase (manB) from Salmonella typhimurium (strain LT2 / SGSC1412 / ATCC 700720).